The following is a 775-amino-acid chain: MRGGMAITAALVVVAAAAESRWAELGREITYDGRALVVSGARRMFFSGDMHYARSTPEMWPKLIAKAKNGGLDVIQTYVFWNVHEPIQGQYNFEGRYDLVKFIREIQAQGLYVSLRIGPFVEAEWKYGGFPFWLHDVPSITFRSDNEPFKQHMQNFVTKIVTMMKHEGLYYPQGGPIIISQIENEYQMIEPAFGASGPRYVRWAAAMAVGLQTGVPWMMCKQNDAPDPVINTCNGLICGETFVGPNSPNKPALWTENWTSRSNGQNNSAFSYPIYGNDTKLRAPEDIAFAVALFIARKKGSFVSYYMYHGGTNFGRFAASYVTTSYYDGAPLDEYDFKCVAFLVNFDQHNTPKVEFRNISLELAPKSISVLSDCRNVVFETAKVNAQHGSRTANAVQSLNDINNWKAFIEPVPQDLSKSTYTGNQLFEQLTTTKDETDYLWYIVSYKNRASDGNQIAHLYVKSLAHILHAFVNNEYVGSVHGSHDGPRNIVLNTHMSLKEGDNTISLLSVMVGSPDSGAYMERRTFGIQTVGIQQGQQPMHLLNNDLWGYQVGLFGEKDSIYTQEGTNSVRWMDINNLIYHPLTWYKTTFSTPPGNDAVTLNLTSMGKGEVWVNGESIGRYWVSFKAPSGQPSQSLYHIPRGFLTPKDNLLVLVEEMGGDPLQITVNTMSVTTVCGNVDEFSVPPLQSRGKVPKVRIWCQGGNRISSIEFASYGNPVGDCRSFRIGSCHAESSESVVKQSCIGRRGCSIPVMAAKFGGDPCPGIQKSLLVVADCR.

A signal peptide spans 1 to 17; it reads MRGGMAITAALVVVAAA. Residue E185 is the Proton donor of the active site. Residue E256 is the Nucleophile of the active site. 5 N-linked (GlcNAc...) asparagine glycosylation sites follow: N257, N266, N277, N358, and N602. Positions 689-775 constitute an SUEL-type lectin domain; the sequence is RGKVPKVRIW…KSLLVVADCR (87 aa).

The protein belongs to the glycosyl hydrolase 35 family.

Its subcellular location is the secreted. The protein localises to the extracellular space. It localises to the apoplast. The catalysed reaction is Hydrolysis of terminal non-reducing beta-D-galactose residues in beta-D-galactosides.. The chain is Beta-galactosidase 7 from Oryza sativa subsp. japonica (Rice).